Reading from the N-terminus, the 1218-residue chain is NACHT, LRR and PYD domains-containing protein 1a allele 3 (1218 aa).

The span at 1-29 (MGESQSKQESNTRVAQHGSQQDVDPTFQT) shows a compositional bias: polar residues. 2 disordered regions span residues 1-44 (MGES…QVEQ) and 71-91 (EMDH…DRSE). Over residues 77–87 (RRHSHQSKKKL) the composition is skewed to basic residues. The 310-residue stretch at 175–484 (QLVIIEGAAG…EFFAAMSYIL (310 aa)) folds into the NACHT domain. 181 to 188 (GAAGIGKS) provides a ligand contact to ATP. LRR repeat units lie at residues 343–364 (KERN…LTLC), 673–693 (NLEE…RSLC), and 730–750 (RLAE…RQLC). Over residues 799–815 (TMPTENTDGEESLTSSK) the composition is skewed to polar residues. Positions 799–842 (TMPTENTDGEESLTSSKQQQQQSGDKHMEPLGTDDDFWGPSGPV) are disordered. The segment at 835–968 (FWGPSGPVST…HFAVLENPSF (134 aa)) is ZU5. An FIIND domain is found at 835–1118 (FWGPSGPVST…LRPALPRMAS (284 aa)). The tract at residues 969–1118 (SPMGVLLRMI…LRPALPRMAS (150 aa)) is UPA. Positions 1122–1211 (DAPALLHFVD…HLIMDLLEKS (90 aa)) constitute a CARD domain.

This sequence belongs to the NLRP family. As to quaternary structure, interacts (via LRR repeats) with BCL2 and BCL2L1 (via the loop between motifs BH4 and BH3). Interacts with NOD2; this interaction is enhanced in the presence of muramyl dipeptide (MDP) and increases IL1B release. Interacts with EIF2AK2/PKR; this interaction requires EIF2AK2 activity, is accompanied by EIF2AK2 autophosphorylation and promotes inflammasome assembly in response to danger-associated signals. Interacts with MEFV; this interaction targets Nlrp1a to degradation by autophagy, hence preventing excessive IL1B- and IL18-mediated inflammation. Interacts with DPP9; leading to inhibit activation of the inflammasome. DPP9 acts via formation of a ternary complex, composed of a DPP9 homodimer, one full-length NLRP1 protein, and one cleaved C-terminus of Nlrp1a (NACHT, LRR and PYD domains-containing protein 1a, C-terminus). Interacts with DPP8; leading to inhibit activation of the inflammasome, probably via formation of a ternary complex with DPP8. Interacts with the C-terminal part of Nlrp1a (NACHT, LRR and PYD domains-containing protein 1a, C-terminus) in absence of pathogens and other damage-associated signals. In terms of assembly, interacts with the N-terminal part of Nlrp1a (NACHT, LRR and PYD domains-containing protein 1a, N-terminus) in absence of pathogens and other damage-associated signals. Homomultimer; forms the Nlrp1a inflammasome polymeric complex, a filament composed of homopolymers of this form in response to pathogens and other damage-associated signals. The Nlrp1a inflammasome polymeric complex directly recruits pro-caspase-1 (proCASP1) independently of PYCARD/ASC. Interacts (via CARD domain) with CASP1 (via CARD domain); leading to CASP1 activation. In terms of processing, autocatalytically cleaved. Autocatalytic cleavage in FIIND region occurs constitutively, prior to activation signals, and is required for inflammasome activity (IL1B release), possibly by facilitating CASP1 binding. Both N- and C-terminal parts remain associated non-covalently. Post-translationally, ubiquitinated in response to pathogen-associated signals, leading to its degradation by the proteasome and subsequent release of the cleaved C-terminal part of the protein (NACHT, LRR and PYD domains-containing protein 1a, C-terminus), which polymerizes and forms the Nlrp1a inflammasome.

It localises to the cytoplasm. Its subcellular location is the cytosol. The protein localises to the nucleus. It is found in the inflammasome. Activated by pathogens and other damage-associated signals: activation promotes ubiquitination and degradation of the N-terminal part, releasing the cleaved C-terminal part of the protein (NACHT, LRR and PYD domains-containing protein 1a, C-terminus), which polymerizes and forms the Nlrp1a inflammasome. Nlrp1a inflammasome is inhibited by DPP8 and DPP9, which sequester the C-terminal fragment of Nlrp1a (NACHT, LRR and PYD domains-containing protein 1a, C-terminus) in a ternary complex, thereby preventing Nlrp1a oligomerization and activation. Nlrp1a inflammasome is strongly activated by Val-boroPro (Talabostat, PT-100), an inhibitor of dipeptidyl peptidases DPP8 and DPP9. Val-boroPro relieves inhibition of DPP8 and/or DPP9 by promoting disruption of the ternary complex, releasing its C-terminal part from autoinhibition. Not activated by cleavage by B.anthracis lethal toxin (LT) endopeptidase. Functionally, acts as the sensor component of the Nlrp1a inflammasome, which mediates inflammasome activation in response to various pathogen-associated signals, leading to subsequent pyroptosis. Inflammasomes are supramolecular complexes that assemble in the cytosol in response to pathogens and other damage-associated signals and play critical roles in innate immunity and inflammation. Acts as a recognition receptor (PRR): recognizes specific pathogens and other damage-associated signals, such as Val-boroPro inhibitor, and mediates the formation of the inflammasome polymeric complex. In response to pathogen-associated signals, the N-terminal part of Nlrp1a is degraded by the proteasome, releasing the cleaved C-terminal part of the protein (NACHT, LRR and PYD domains-containing protein 1a, C-terminus), which polymerizes to initiate the formation of the inflammasome complex: the inflammasome directly recruits pro-caspase-1 (proCASP1) independently of PYCARD/ASC and promotes caspase-1 (CASP1) activation, which subsequently cleaves and activates inflammatory cytokines IL1B and IL18 and gasdermin-D (GSDMD), leading to pyroptosis. In the absence of GSDMD expression, the Nlrp1a inflammasome is able to recruit and activate CASP8, leading to activation of gasdermin-E (GSDME). Its function is as follows. Constitutes the precursor of the Nlrp1a inflammasome, which mediates autoproteolytic processing within the FIIND domain to generate the N-terminal and C-terminal parts, which are associated non-covalently in absence of pathogens and other damage-associated signals. In terms of biological role, regulatory part that prevents formation of the Nlrp1a inflammasome: in absence of pathogens and other damage-associated signals, interacts with the C-terminal part of Nlrp1a (NACHT, LRR and PYD domains-containing protein 1a, C-terminus), preventing activation of the Nlrp1a inflammasome. In response to pathogen-associated signals, this part is ubiquitinated by the N-end rule pathway and degraded by the proteasome, releasing the cleaved C-terminal part of the protein, which polymerizes and forms the Nlrp1a inflammasome. Constitutes the active part of the Nlrp1a inflammasome. In absence of pathogens and other damage-associated signals, interacts with the N-terminal part of Nlrp1a (NACHT, LRR and PYD domains-containing protein 1a, N-terminus), preventing activation of the Nlrp1a inflammasome. In response to pathogen-associated signals, the N-terminal part of Nlrp1a is degraded by the proteasome, releasing this form, which polymerizes to form the Nlrp1a inflammasome complex: the Nlrp1a inflammasome complex then directly recruits pro-caspase-1 (proCASP1) and promotes caspase-1 (CASP1) activation, leading to gasdermin-D (GSDMD) cleavage and subsequent pyroptosis. This Rattus norvegicus (Rat) protein is NACHT, LRR and PYD domains-containing protein 1a allele 3.